Consider the following 417-residue polypeptide: MFSRDLTIAKYDADLFAAMEQEAQRQEEHIELIASENYTSPAVMEAQGSVLTNKYAEGYPGKRYYGGCEYVDVVEQLAIDRAKELFGADYANVQPHAGSQANAAVYLALLSAGDTILGMSLAHGGHLTHGASVSSSGKLYNAIQYGIDANGLIDYDEVERLAVEHKPKMIVAGFSAYSQILDFPRFRAIADKVGAYLFVDMAHVAGLVAAGVYPNPVPFADVVTTTTHKTLRGPRGGLILAKANADIEKKLNSAVFPGAQGGPLEHVIAAKAICFKEALQPEFKAYQQQVVKNAQAMAGVFIERGFDVVSGGTENHLFLLSLIKQEISGKDADAALGKAFITVNKNSVPNDPRSPFVTSGLRFGTPAVTTRGFKEAECKELAGWICDILADLNNEAVIDAVREKVKAICKKLPVYGA.

(6S)-5,6,7,8-tetrahydrofolate-binding positions include leucine 121 and glycine 125–leucine 127. Residue lysine 229 is modified to N6-(pyridoxal phosphate)lysine. Serine 354–phenylalanine 356 provides a ligand contact to (6S)-5,6,7,8-tetrahydrofolate.

Belongs to the SHMT family. Homodimer. Pyridoxal 5'-phosphate serves as cofactor.

The protein localises to the cytoplasm. It catalyses the reaction (6R)-5,10-methylene-5,6,7,8-tetrahydrofolate + glycine + H2O = (6S)-5,6,7,8-tetrahydrofolate + L-serine. It functions in the pathway one-carbon metabolism; tetrahydrofolate interconversion. It participates in amino-acid biosynthesis; glycine biosynthesis; glycine from L-serine: step 1/1. Its function is as follows. Catalyzes the reversible interconversion of serine and glycine with tetrahydrofolate (THF) serving as the one-carbon carrier. This reaction serves as the major source of one-carbon groups required for the biosynthesis of purines, thymidylate, methionine, and other important biomolecules. Also exhibits THF-independent aldolase activity toward beta-hydroxyamino acids, producing glycine and aldehydes, via a retro-aldol mechanism. The protein is Serine hydroxymethyltransferase 2 of Pseudomonas fluorescens (strain Pf0-1).